The following is a 136-amino-acid chain: MSALVYFSSSSENTHRFMQRLGLPATRIPLNERERIRVDEPYILVVPSYGGGGMAGAVPRQVIRFLNDEHNRARIRGVIASGNRNFGDAWGCAGDVIAQKCGVPWLYRFELMGTQRDIDNVRKGVNEFWQQLSRSA.

The protein belongs to the NrdI family.

Probably involved in ribonucleotide reductase function. In Salmonella dublin (strain CT_02021853), this protein is Protein NrdI.